We begin with the raw amino-acid sequence, 205 residues long: Ribosomal RNA large subunit methyltransferase E (205 aa).

S-adenosyl-L-methionine is bound by residues glycine 50, tryptophan 52, aspartate 67, asparagine 83, and aspartate 111. The Proton acceptor role is filled by lysine 151.

It belongs to the class I-like SAM-binding methyltransferase superfamily. RNA methyltransferase RlmE family.

Its subcellular location is the cytoplasm. It carries out the reaction uridine(2552) in 23S rRNA + S-adenosyl-L-methionine = 2'-O-methyluridine(2552) in 23S rRNA + S-adenosyl-L-homocysteine + H(+). In terms of biological role, specifically methylates the uridine in position 2552 of 23S rRNA at the 2'-O position of the ribose in the fully assembled 50S ribosomal subunit. The sequence is that of Ribosomal RNA large subunit methyltransferase E from Thermoplasma acidophilum (strain ATCC 25905 / DSM 1728 / JCM 9062 / NBRC 15155 / AMRC-C165).